The primary structure comprises 341 residues: Ketol-acid reductoisomerase (NADP(+)) (341 aa).

The KARI N-terminal Rossmann domain occupies 1–182; the sequence is MATIYYDKDA…GCTRAGVLET (182 aa). Residues 25–28, Ser-51, Ser-53, and 83–86 each bind NADP(+); these read YGSQ and DQTQ. Residue His-108 is part of the active site. Residue Gly-134 coordinates NADP(+). The KARI C-terminal knotted domain occupies 183-328; the sequence is TFKEETETDL…KRLRDMMSWI (146 aa). Residues Asp-191, Glu-195, Glu-227, and Glu-231 each contribute to the Mg(2+) site. Position 252 (Ser-252) interacts with substrate.

It belongs to the ketol-acid reductoisomerase family. Requires Mg(2+) as cofactor.

The catalysed reaction is (2R)-2,3-dihydroxy-3-methylbutanoate + NADP(+) = (2S)-2-acetolactate + NADPH + H(+). It catalyses the reaction (2R,3R)-2,3-dihydroxy-3-methylpentanoate + NADP(+) = (S)-2-ethyl-2-hydroxy-3-oxobutanoate + NADPH + H(+). The protein operates within amino-acid biosynthesis; L-isoleucine biosynthesis; L-isoleucine from 2-oxobutanoate: step 2/4. Its pathway is amino-acid biosynthesis; L-valine biosynthesis; L-valine from pyruvate: step 2/4. In terms of biological role, involved in the biosynthesis of branched-chain amino acids (BCAA). Catalyzes an alkyl-migration followed by a ketol-acid reduction of (S)-2-acetolactate (S2AL) to yield (R)-2,3-dihydroxy-isovalerate. In the isomerase reaction, S2AL is rearranged via a Mg-dependent methyl migration to produce 3-hydroxy-3-methyl-2-ketobutyrate (HMKB). In the reductase reaction, this 2-ketoacid undergoes a metal-dependent reduction by NADPH to yield (R)-2,3-dihydroxy-isovalerate. The sequence is that of Ketol-acid reductoisomerase (NADP(+)) from Anaeromyxobacter sp. (strain K).